Consider the following 332-residue polypeptide: MSKLEQTWFNECYTSLIDSPLAHWLQTLPALMDTWQRTAKHGEFDKWCRLLNKLPNTSPQQIDLSTSVTIGAKSDVDEYTQKQIEGLLRQFMPWRKGPFHVHGIHIDTEWRSDWKWDRVAPHISCLKGRNVLDVGCGSGYHMWRMLGEGANRVIGVDPTQLFFIQFHAIKQFIRNSYGPANNIHFLPMGIEDMQPLQAFDTVFSMGVLYHRKDPMAFLQQLKDQLRKGGELILETLVVDGDETTVLMAGERYAQMRNVWFLPSTDALTVWLSRLGFENIRVVDVNHTTLDEQRSTSWMDTQSLKDFLDPEDITRTIEGYPAPQRAVIVANKK.

Residues Lys-96, Trp-110, Lys-115, Gly-135, 157–159 (DPT), 190–191 (IE), Met-205, Tyr-209, and Arg-324 contribute to the carboxy-S-adenosyl-L-methionine site.

The protein belongs to the class I-like SAM-binding methyltransferase superfamily. CmoB family. In terms of assembly, homotetramer.

The enzyme catalyses carboxy-S-adenosyl-L-methionine + 5-hydroxyuridine(34) in tRNA = 5-carboxymethoxyuridine(34) in tRNA + S-adenosyl-L-homocysteine + H(+). In terms of biological role, catalyzes carboxymethyl transfer from carboxy-S-adenosyl-L-methionine (Cx-SAM) to 5-hydroxyuridine (ho5U) to form 5-carboxymethoxyuridine (cmo5U) at position 34 in tRNAs. This chain is tRNA U34 carboxymethyltransferase, found in Alteromonas mediterranea (strain DSM 17117 / CIP 110805 / LMG 28347 / Deep ecotype).